A 484-amino-acid chain; its full sequence is Serine/arginine-rich splicing factor 11 (484 aa).

The interval 1–33 (MSNTTVVPSTAGPGPSGGPGGGGGGGGGGGGTE) is disordered. Ser2 bears the N-acetylserine mark. Positions 14-32 (GPSGGPGGGGGGGGGGGGT) are enriched in gly residues. In terms of domain architecture, RRM spans 33–113 (EVIQVTNVSP…ALIVVPYAEG (81 aa)). Lys197 is covalently cross-linked (Glycyl lysine isopeptide (Lys-Gly) (interchain with G-Cter in SUMO2)). The residue at position 207 (Ser207) is a Phosphoserine. A Glycyl lysine isopeptide (Lys-Gly) (interchain with G-Cter in SUMO2) cross-link involves residue Lys211. At Ser212 the chain carries Phosphoserine. The disordered stretch occupies residues 233-484 (ISAAIEPDKK…HHEEDMDMSD (252 aa)). The segment covering 244–308 (EKRRHSRSRS…ERGRRSRSTS (65 aa)) has biased composition (basic residues). Repeat copies occupy residues 247 to 255 (RHSRSRSRS), 258 to 265 (RRTPSSSR), 267 to 274 (RRSRSRSR), 275 to 282 (RRSHSKSR), 285 to 292 (RRSKSPRR), 293 to 300 (RRSHSRER), 302 to 309 (RRSRSTSK), 321 to 328 (KRSKTPPK), 334 to 341 (RRSRSASR), and 346 to 353 (RRSRSGTR). The tract at residues 247–353 (RHSRSRSRSR…RRRRSRSGTR (107 aa)) is 10 X 8 AA approximate repeats of R-R-S-R-S-R-S-R. Residues 309 to 320 (KTRDKKKEDKEK) show a composition bias toward basic and acidic residues. Ser323 is subject to Phosphoserine. Thr325 is subject to Phosphothreonine. The segment covering 334–379 (RRSRSASRERRRRRSRSGTRSPKKPRSPKRKLSRSPSPRRHKKEKK) has biased composition (basic residues). 3 stretches are compositionally biased toward basic and acidic residues: residues 380-395 (KDKD…ERST), 402-424 (KDKE…VTRD), and 433-478 (DSEK…HHEE). A phosphoserine mark is found at Ser414 and Ser434. Residue Thr447 is modified to Phosphothreonine. Phosphoserine occurs at positions 449, 456, 464, and 483.

This sequence belongs to the splicing factor SR family. Interacts with PUF60.

Its subcellular location is the nucleus. Its function is as follows. May function in pre-mRNA splicing. In Homo sapiens (Human), this protein is Serine/arginine-rich splicing factor 11 (SRSF11).